The chain runs to 908 residues: Protein translocase subunit SecA (908 aa).

Residues glutamine 90, 108–112, and aspartate 503 each bind ATP; that span reads GEGKT. Residues 846–864 are compositionally biased toward low complexity; sequence AAAAEAPVAPAPQPAAAAP. Positions 846–884 are disordered; sequence AAAAEAPVAPAPQPAAAAPQPTPELVGAEAGEPDPAAWG. Zn(2+) is bound by residues cysteine 892, cysteine 894, cysteine 903, and histidine 904.

It belongs to the SecA family. Monomer and homodimer. Part of the essential Sec protein translocation apparatus which comprises SecA, SecYEG and auxiliary proteins SecDF-YajC and YidC. Requires Zn(2+) as cofactor.

The protein resides in the cell inner membrane. Its subcellular location is the cytoplasm. It carries out the reaction ATP + H2O + cellular proteinSide 1 = ADP + phosphate + cellular proteinSide 2.. Functionally, part of the Sec protein translocase complex. Interacts with the SecYEG preprotein conducting channel. Has a central role in coupling the hydrolysis of ATP to the transfer of proteins into and across the cell membrane, serving both as a receptor for the preprotein-SecB complex and as an ATP-driven molecular motor driving the stepwise translocation of polypeptide chains across the membrane. This Cereibacter sphaeroides (strain KD131 / KCTC 12085) (Rhodobacter sphaeroides) protein is Protein translocase subunit SecA.